The chain runs to 409 residues: Gamma-glutamyl phosphate reductase (409 aa).

The protein belongs to the gamma-glutamyl phosphate reductase family.

The protein resides in the cytoplasm. It carries out the reaction L-glutamate 5-semialdehyde + phosphate + NADP(+) = L-glutamyl 5-phosphate + NADPH + H(+). Its pathway is amino-acid biosynthesis; L-proline biosynthesis; L-glutamate 5-semialdehyde from L-glutamate: step 2/2. In terms of biological role, catalyzes the NADPH-dependent reduction of L-glutamate 5-phosphate into L-glutamate 5-semialdehyde and phosphate. The product spontaneously undergoes cyclization to form 1-pyrroline-5-carboxylate. The polypeptide is Gamma-glutamyl phosphate reductase (Koribacter versatilis (strain Ellin345)).